The chain runs to 92 residues: Small ribosomal subunit protein uS19 (92 aa).

This sequence belongs to the universal ribosomal protein uS19 family.

In terms of biological role, protein S19 forms a complex with S13 that binds strongly to the 16S ribosomal RNA. The chain is Small ribosomal subunit protein uS19 (rpsS) from Geobacillus stearothermophilus (Bacillus stearothermophilus).